Here is a 128-residue protein sequence, read N- to C-terminus: Fluoride-specific ion channel FluC (128 aa).

The next 4 membrane-spanning stretches (helical) occupy residues 4 to 24, 39 to 59, 71 to 91, and 99 to 119; these read LLLALIVGLGGFLGASLRYLI, GTLIANILGALLIGFIMEFSM, FLTTGIMGGLTTFSTFSYETI, and MTLGIENIILNLGCSLLFVVI. The Na(+) site is built by G78 and T81.

This sequence belongs to the fluoride channel Fluc/FEX (TC 1.A.43) family.

Its subcellular location is the cell membrane. The catalysed reaction is fluoride(in) = fluoride(out). With respect to regulation, na(+) is not transported, but it plays an essential structural role and its presence is essential for fluoride channel function. Functionally, fluoride-specific ion channel. Important for reducing fluoride concentration in the cell, thus reducing its toxicity. This Clostridium perfringens (strain 13 / Type A) protein is Fluoride-specific ion channel FluC.